A 149-amino-acid polypeptide reads, in one-letter code: Ribosome maturation factor RimP (149 aa).

Belongs to the RimP family.

The protein localises to the cytoplasm. Functionally, required for maturation of 30S ribosomal subunits. The chain is Ribosome maturation factor RimP from Neisseria meningitidis serogroup A / serotype 4A (strain DSM 15465 / Z2491).